Here is a 416-residue protein sequence, read N- to C-terminus: Tyrosine--tRNA ligase (416 aa).

Position 34 (Tyr-34) interacts with L-tyrosine. The short motif at 39 to 48 (PTGDSLHIGH) is the 'HIGH' region element. L-tyrosine contacts are provided by Tyr-165 and Gln-169. The 'KMSKS' region motif lies at 227–231 (KFGKT). Lys-230 is a binding site for ATP. The S4 RNA-binding domain maps to 349–416 (ENIIIWLTDN…KKHYYLARVK (68 aa)).

It belongs to the class-I aminoacyl-tRNA synthetase family. TyrS type 1 subfamily. As to quaternary structure, homodimer.

It localises to the cytoplasm. It catalyses the reaction tRNA(Tyr) + L-tyrosine + ATP = L-tyrosyl-tRNA(Tyr) + AMP + diphosphate + H(+). In terms of biological role, catalyzes the attachment of tyrosine to tRNA(Tyr) in a two-step reaction: tyrosine is first activated by ATP to form Tyr-AMP and then transferred to the acceptor end of tRNA(Tyr). This Limosilactobacillus reuteri (strain DSM 20016) (Lactobacillus reuteri) protein is Tyrosine--tRNA ligase.